Consider the following 440-residue polypeptide: Mitochondrial translation factor 2 (440 aa).

Residues 1 to 15 (MIRTSSILKNCNYRY) constitute a mitochondrion transit peptide.

Its subcellular location is the mitochondrion matrix. Its function is as follows. Required for the processing and/or for the stability of the CYTB and COX1 intron-containing pre-mRNAs and of the ATP6 transcript. Could be a stem-loop RNA-binding protein that plays a role in determining RNA stability. The protein is Mitochondrial translation factor 2 (MTF2) of Saccharomyces cerevisiae (strain ATCC 204508 / S288c) (Baker's yeast).